The primary structure comprises 423 residues: UPF0597 protein Emin_0811 (423 aa).

The protein belongs to the UPF0597 family.

The chain is UPF0597 protein Emin_0811 from Elusimicrobium minutum (strain Pei191).